Consider the following 208-residue polypeptide: Flavin-dependent thymidylate synthase (208 aa).

The region spanning 1–208 (MEVICKHYTP…QYLFEDCLKH (208 aa)) is the ThyX domain. FAD contacts are provided by residues serine 50 and 74 to 76 (RHR). Residues 71–74 (ELSR), 84–86 (SSR), and lysine 147 contribute to the dUMP site. A ThyX motif motif is present at residues 74 to 84 (RHRIASLSVKS). FAD contacts are provided by residues 163-165 (NAR) and asparagine 169. Residue arginine 174 participates in dUMP binding. The active-site Involved in ionization of N3 of dUMP, leading to its activation is arginine 174.

This sequence belongs to the thymidylate synthase ThyX family. As to quaternary structure, homotetramer. FAD is required as a cofactor.

It catalyses the reaction dUMP + (6R)-5,10-methylene-5,6,7,8-tetrahydrofolate + NADPH + H(+) = dTMP + (6S)-5,6,7,8-tetrahydrofolate + NADP(+). It functions in the pathway pyrimidine metabolism; dTTP biosynthesis. Its function is as follows. Catalyzes the reductive methylation of 2'-deoxyuridine-5'-monophosphate (dUMP) to 2'-deoxythymidine-5'-monophosphate (dTMP) while utilizing 5,10-methylenetetrahydrofolate (mTHF) as the methyl donor, and NAD(P)H and FADH(2) as the reductant. This is Flavin-dependent thymidylate synthase from Helicobacter pylori (strain ATCC 700392 / 26695) (Campylobacter pylori).